Consider the following 82-residue polypeptide: Small ribosomal subunit protein bS18 (82 aa).

Belongs to the bacterial ribosomal protein bS18 family. Part of the 30S ribosomal subunit. Forms a tight heterodimer with protein bS6.

In terms of biological role, binds as a heterodimer with protein bS6 to the central domain of the 16S rRNA, where it helps stabilize the platform of the 30S subunit. The chain is Small ribosomal subunit protein bS18 from Methylobacterium nodulans (strain LMG 21967 / CNCM I-2342 / ORS 2060).